The sequence spans 188 residues: dCTP deaminase (188 aa).

Residues 111–116 (KSTYAR), 135–137 (TLE), Q156, Y170, and Q180 contribute to the dCTP site. Residue E137 is the Proton donor/acceptor of the active site.

Belongs to the dCTP deaminase family. In terms of assembly, homotrimer.

It catalyses the reaction dCTP + H2O + H(+) = dUTP + NH4(+). It functions in the pathway pyrimidine metabolism; dUMP biosynthesis; dUMP from dCTP (dUTP route): step 1/2. In terms of biological role, catalyzes the deamination of dCTP to dUTP. This Polaromonas sp. (strain JS666 / ATCC BAA-500) protein is dCTP deaminase.